The chain runs to 112 residues: Small ribosomal subunit protein uS17 (112 aa).

It belongs to the universal ribosomal protein uS17 family. In terms of assembly, part of the 30S ribosomal subunit.

Functionally, one of the primary rRNA binding proteins, it binds specifically to the 5'-end of 16S ribosomal RNA. This chain is Small ribosomal subunit protein uS17, found in Thermotoga neapolitana (strain ATCC 49049 / DSM 4359 / NBRC 107923 / NS-E).